The primary structure comprises 340 residues: MDKQRVAVIGPGSWGTALSQVLNDNGHEVRIWGNIAEQINEINDEHTNKRYFKDIVLDEKIKAYHDLEEALKDADAVLFVVPTKVTRLVAKQVAQALDHKVKIMHASKGLEPNTHERISTILEEEIPAELRSEIVVVSGPSHAEETIVRDITLITAASKDLETAKYVQELFSNHYFRLYTNTDVIGVETAGALKNIIAVGAGALHGLGYGDNAKAAIITRGLAEITRLGVKLGANPLTYSGLSGVGDLIVTGTSVHSRNWRAGNALGRGEKLADIEANMGMVIEGISTTKAAYELAQELDVYMPITQAIYKVIYQNCNIKEAIYEIMNNEFKAENEWTSF.

NADPH-binding residues include serine 13, tryptophan 14, and lysine 108. Sn-glycerol 3-phosphate-binding residues include lysine 108, glycine 139, and serine 141. Alanine 143 is an NADPH binding site. Positions 194, 247, 257, 258, and 259 each coordinate sn-glycerol 3-phosphate. Residue lysine 194 is the Proton acceptor of the active site. Arginine 258 provides a ligand contact to NADPH. Residues valine 282 and glutamate 284 each coordinate NADPH.

This sequence belongs to the NAD-dependent glycerol-3-phosphate dehydrogenase family.

Its subcellular location is the cytoplasm. It carries out the reaction sn-glycerol 3-phosphate + NAD(+) = dihydroxyacetone phosphate + NADH + H(+). The enzyme catalyses sn-glycerol 3-phosphate + NADP(+) = dihydroxyacetone phosphate + NADPH + H(+). Its pathway is membrane lipid metabolism; glycerophospholipid metabolism. Functionally, catalyzes the reduction of the glycolytic intermediate dihydroxyacetone phosphate (DHAP) to sn-glycerol 3-phosphate (G3P), the key precursor for phospholipid synthesis. This is Glycerol-3-phosphate dehydrogenase [NAD(P)+] from Streptococcus sanguinis (strain SK36).